Reading from the N-terminus, the 375-residue chain is 4-hydroxy-3-methylbut-2-en-1-yl diphosphate synthase (flavodoxin) (375 aa).

Cysteine 270, cysteine 273, cysteine 305, and glutamate 312 together coordinate [4Fe-4S] cluster.

The protein belongs to the IspG family. [4Fe-4S] cluster is required as a cofactor.

The catalysed reaction is (2E)-4-hydroxy-3-methylbut-2-enyl diphosphate + oxidized [flavodoxin] + H2O + 2 H(+) = 2-C-methyl-D-erythritol 2,4-cyclic diphosphate + reduced [flavodoxin]. It functions in the pathway isoprenoid biosynthesis; isopentenyl diphosphate biosynthesis via DXP pathway; isopentenyl diphosphate from 1-deoxy-D-xylulose 5-phosphate: step 5/6. Functionally, converts 2C-methyl-D-erythritol 2,4-cyclodiphosphate (ME-2,4cPP) into 1-hydroxy-2-methyl-2-(E)-butenyl 4-diphosphate. The protein is 4-hydroxy-3-methylbut-2-en-1-yl diphosphate synthase (flavodoxin) of Yersinia pseudotuberculosis serotype IB (strain PB1/+).